Here is a 453-residue protein sequence, read N- to C-terminus: F-box protein SKIP14 (453 aa).

Positions 34–104 (RKNTGGDASS…NRQQLFAGLS (71 aa)) constitute an F-box; degenerate domain.

In terms of assembly, part of a SCF (ASK-cullin-F-box) protein ligase complex. Interacts with CUL1, SKP1A/ASK1 and SPK1B/ASK2.

Its pathway is protein modification; protein ubiquitination. Component of SCF(ASK-cullin-F-box) E3 ubiquitin ligase complexes, which may mediate the ubiquitination and subsequent proteasomal degradation of target proteins. The polypeptide is F-box protein SKIP14 (SKIP14) (Arabidopsis thaliana (Mouse-ear cress)).